A 462-amino-acid chain; its full sequence is A-type ATP synthase subunit B (462 aa).

It belongs to the ATPase alpha/beta chains family. As to quaternary structure, has multiple subunits with at least A(3), B(3), C, D, E, F, H, I and proteolipid K(x).

The protein localises to the cell membrane. Its function is as follows. Component of the A-type ATP synthase that produces ATP from ADP in the presence of a proton gradient across the membrane. The B chain is a regulatory subunit. The chain is A-type ATP synthase subunit B from Methanococcus maripaludis (strain C6 / ATCC BAA-1332).